We begin with the raw amino-acid sequence, 317 residues long: Peroxidase 64 (317 aa).

An N-terminal signal peptide occupies residues 1–22; the sequence is MNAHMLNLLVIVIFVVSFDVQA. Disulfide bonds link Cys32–Cys111, Cys65–Cys70, Cys117–Cys313, and Cys195–Cys227. Residue His63 is the Proton acceptor of the active site. Positions 64, 67, 69, 71, and 73 each coordinate Ca(2+). Pro158 provides a ligand contact to substrate. A glycan (N-linked (GlcNAc...) asparagine) is linked at Asn163. Residue His188 coordinates heme b. Thr189 lines the Ca(2+) pocket. Ca(2+) is bound by residues Asp241, Thr243, and Asp248.

It belongs to the peroxidase family. Classical plant (class III) peroxidase subfamily. Requires heme b as cofactor. Ca(2+) serves as cofactor. As to expression, expressed in the whole plant, but preferentially in roots.

It is found in the secreted. The catalysed reaction is 2 a phenolic donor + H2O2 = 2 a phenolic radical donor + 2 H2O. Removal of H(2)O(2), oxidation of toxic reductants, biosynthesis and degradation of lignin, suberization, auxin catabolism, response to environmental stresses such as wounding, pathogen attack and oxidative stress. These functions might be dependent on each isozyme/isoform in each plant tissue. The chain is Peroxidase 64 (PER64) from Arabidopsis thaliana (Mouse-ear cress).